The chain runs to 111 residues: Ribonuclease P protein component (111 aa).

This sequence belongs to the RnpA family. As to quaternary structure, consists of a catalytic RNA component (M1 or rnpB) and a protein subunit.

It catalyses the reaction Endonucleolytic cleavage of RNA, removing 5'-extranucleotides from tRNA precursor.. Its function is as follows. RNaseP catalyzes the removal of the 5'-leader sequence from pre-tRNA to produce the mature 5'-terminus. It can also cleave other RNA substrates such as 4.5S RNA. The protein component plays an auxiliary but essential role in vivo by binding to the 5'-leader sequence and broadening the substrate specificity of the ribozyme. This Clostridium botulinum (strain 657 / Type Ba4) protein is Ribonuclease P protein component.